The chain runs to 152 residues: Large ribosomal subunit protein uL13 (152 aa).

This sequence belongs to the universal ribosomal protein uL13 family. As to quaternary structure, part of the 50S ribosomal subunit.

Its function is as follows. This protein is one of the early assembly proteins of the 50S ribosomal subunit, although it is not seen to bind rRNA by itself. It is important during the early stages of 50S assembly. This is Large ribosomal subunit protein uL13 from Wolbachia pipientis subsp. Culex pipiens (strain wPip).